A 102-amino-acid chain; its full sequence is Large ribosomal subunit protein uL23c (102 aa).

The protein belongs to the universal ribosomal protein uL23 family. In terms of assembly, part of the 50S ribosomal subunit.

It localises to the plastid. Its subcellular location is the chloroplast. Functionally, binds to 23S rRNA. The protein is Large ribosomal subunit protein uL23c (rpl23) of Phaeodactylum tricornutum (strain CCAP 1055/1).